The following is a 288-amino-acid chain: ATP synthase gamma chain (288 aa).

It belongs to the ATPase gamma chain family. As to quaternary structure, F-type ATPases have 2 components, CF(1) - the catalytic core - and CF(0) - the membrane proton channel. CF(1) has five subunits: alpha(3), beta(3), gamma(1), delta(1), epsilon(1). CF(0) has three main subunits: a, b and c.

Its subcellular location is the cell inner membrane. In terms of biological role, produces ATP from ADP in the presence of a proton gradient across the membrane. The gamma chain is believed to be important in regulating ATPase activity and the flow of protons through the CF(0) complex. The polypeptide is ATP synthase gamma chain (Haemophilus ducreyi (strain 35000HP / ATCC 700724)).